Reading from the N-terminus, the 209-residue chain is MIGLVGKKLGMTRIFTEDGVSIPVTVIEIEANRVTQVKDLANDGYRAVQVTTGSKKANRVTKPEAGHFAKAGVEAGRGLWEFRTAEGEEFTAGQNISVEIFAEVKKVDVTGTSKGKGFAGTVKRWNFRTQDATHGNSLSHRVPGSIGQNQTPGKVFKGKKMAGHLGDERVTVQSLDVVRVDAERNLLLVKGAVPGATGGNLIVKPAVKA.

Positions 133-153 (THGNSLSHRVPGSIGQNQTPG) are disordered. Glutamine 150 carries the post-translational modification N5-methylglutamine.

The protein belongs to the universal ribosomal protein uL3 family. As to quaternary structure, part of the 50S ribosomal subunit. Forms a cluster with proteins L14 and L19. In terms of processing, methylated by PrmB.

Its function is as follows. One of the primary rRNA binding proteins, it binds directly near the 3'-end of the 23S rRNA, where it nucleates assembly of the 50S subunit. In Serratia proteamaculans (strain 568), this protein is Large ribosomal subunit protein uL3.